Reading from the N-terminus, the 493-residue chain is MNSTSLYAAIDLGSNSFHMLVVREAAGSIQTLTRIKRKVRLAAGLNNDNHLSAEAMERGWQCLRLFAERLQDIPQPQIRVVATATLRLAVNAGEFIAKAQTILGCPVQVISGEEEARLIYQGVAHTTGGADQRLVVDIGGASTELVTGTGAQTTSLFSLSMGCVTWLERYFSDRNLAQENFDDAEKVARDVLRPVADELRFHGWKVCVGASGTVQALQEIMMAQGMDERITLAKLQQLKQRAIQCGRLEELEIEGLTLERALVFPSGLAILIAIFTELNIQSMTLAGGALREGLVYGMLHLAVDQDIRSRTLRNIQRRFIVDTDQANRVAKLADNFLKQVENAWHIEPISRELLLSACQLHEIGLSVDFKQAPYHAAYLVRHLDLPGYTPAQKKLLATLLLNQTNPVDLSSLHQQNAVPPRVAEQLCRLLRLAILFAGRRRDDLVPEITLQALNENLTLTLPGDWLAHHPLGKELIDQESQWQSYVHWPLDVR.

Belongs to the GppA/Ppx family. GppA subfamily.

It catalyses the reaction guanosine 3'-diphosphate 5'-triphosphate + H2O = guanosine 3',5'-bis(diphosphate) + phosphate + H(+). It functions in the pathway purine metabolism; ppGpp biosynthesis; ppGpp from GTP: step 2/2. Functionally, catalyzes the conversion of pppGpp to ppGpp. Guanosine pentaphosphate (pppGpp) is a cytoplasmic signaling molecule which together with ppGpp controls the 'stringent response', an adaptive process that allows bacteria to respond to amino acid starvation, resulting in the coordinated regulation of numerous cellular activities. This chain is Guanosine-5'-triphosphate,3'-diphosphate pyrophosphatase, found in Salmonella gallinarum (strain 287/91 / NCTC 13346).